The primary structure comprises 316 residues: MANNEESRGLKSLFDWFANRRKSGSTSLERQEREIADGLWHKCSKCGVLAYTKDLKANQMVCIECGHHNRVDSDERIRQLIDNNTWKPLDEHLRPTDPLEFRDRKLYSDRLRETQDKIGLIDAVRTGLGQINGLPIALGVMDFRFMGGSMGSVVGEKLTRMIEQATQRRYPVVIICTSGGARMQEGMLSLMQMAKISAALQRHKDARLLYIPVLTNPTTGGVTASFAMLGDIILAEPKATIGFAGRRVIEQTLREKLPENFQTAEDLLQHGFVDDIVPRTQLKNTLAQLIALHQPVLTPPHMVLWETMSLTSTAAE.

One can recognise a CoA carboxyltransferase N-terminal domain in the interval 39–308 (LWHKCSKCGV…PPHMVLWETM (270 aa)). Residues C43, C46, C62, and C65 each coordinate Zn(2+). Residues 43-65 (CSKCGVLAYTKDLKANQMVCIEC) form a C4-type zinc finger.

This sequence belongs to the AccD/PCCB family. As to quaternary structure, acetyl-CoA carboxylase is a heterohexamer composed of biotin carboxyl carrier protein (AccB), biotin carboxylase (AccC) and two subunits each of ACCase subunit alpha (AccA) and ACCase subunit beta (AccD). It depends on Zn(2+) as a cofactor.

Its subcellular location is the cytoplasm. The catalysed reaction is N(6)-carboxybiotinyl-L-lysyl-[protein] + acetyl-CoA = N(6)-biotinyl-L-lysyl-[protein] + malonyl-CoA. The protein operates within lipid metabolism; malonyl-CoA biosynthesis; malonyl-CoA from acetyl-CoA: step 1/1. In terms of biological role, component of the acetyl coenzyme A carboxylase (ACC) complex. Biotin carboxylase (BC) catalyzes the carboxylation of biotin on its carrier protein (BCCP) and then the CO(2) group is transferred by the transcarboxylase to acetyl-CoA to form malonyl-CoA. The polypeptide is Acetyl-coenzyme A carboxylase carboxyl transferase subunit beta (Nostoc punctiforme (strain ATCC 29133 / PCC 73102)).